The sequence spans 142 residues: Large ribosomal subunit protein uL13 (142 aa).

This sequence belongs to the universal ribosomal protein uL13 family. Part of the 50S ribosomal subunit.

In terms of biological role, this protein is one of the early assembly proteins of the 50S ribosomal subunit, although it is not seen to bind rRNA by itself. It is important during the early stages of 50S assembly. This Aliivibrio salmonicida (strain LFI1238) (Vibrio salmonicida (strain LFI1238)) protein is Large ribosomal subunit protein uL13.